We begin with the raw amino-acid sequence, 97 residues long: Large ribosomal subunit protein bL27 (97 aa).

A propeptide spanning residues methionine 1–phenylalanine 12 is cleaved from the precursor. The tract at residues histidine 14–alanine 37 is disordered.

Belongs to the bacterial ribosomal protein bL27 family. The N-terminus is cleaved by ribosomal processing cysteine protease Prp.

In Streptococcus gordonii (strain Challis / ATCC 35105 / BCRC 15272 / CH1 / DL1 / V288), this protein is Large ribosomal subunit protein bL27.